The following is a 124-amino-acid chain: Large ribosomal subunit protein bL12 (124 aa).

This sequence belongs to the bacterial ribosomal protein bL12 family. In terms of assembly, homodimer. Part of the ribosomal stalk of the 50S ribosomal subunit. Forms a multimeric L10(L12)X complex, where L10 forms an elongated spine to which 2 to 4 L12 dimers bind in a sequential fashion. Binds GTP-bound translation factors.

Its function is as follows. Forms part of the ribosomal stalk which helps the ribosome interact with GTP-bound translation factors. Is thus essential for accurate translation. The polypeptide is Large ribosomal subunit protein bL12 (Cereibacter sphaeroides (strain ATCC 17025 / ATH 2.4.3) (Rhodobacter sphaeroides)).